A 482-amino-acid chain; its full sequence is Cysteine--tRNA ligase (482 aa).

C29 lines the Zn(2+) pocket. The 'HIGH' region motif lies at 31–41; the sequence is PTVYDSAHVGH. Positions 210, 235, and 239 each coordinate Zn(2+). The short motif at 272 to 276 is the 'KMSKS' region element; it reads KMSKS. K275 serves as a coordination point for ATP.

The protein belongs to the class-I aminoacyl-tRNA synthetase family. Monomer. Zn(2+) is required as a cofactor.

It is found in the cytoplasm. The enzyme catalyses tRNA(Cys) + L-cysteine + ATP = L-cysteinyl-tRNA(Cys) + AMP + diphosphate. In Anaeromyxobacter sp. (strain Fw109-5), this protein is Cysteine--tRNA ligase.